Here is a 431-residue protein sequence, read N- to C-terminus: Peptidase B (431 aa).

Positions 196 and 201 each coordinate Mn(2+). Lysine 208 is a catalytic residue. Positions 219, 278, and 280 each coordinate Mn(2+). Arginine 282 is an active-site residue.

The protein belongs to the peptidase M17 family. As to quaternary structure, homohexamer. The cofactor is Mn(2+).

The protein resides in the cytoplasm. It carries out the reaction Release of an N-terminal amino acid, Xaa, from a peptide or arylamide. Xaa is preferably Glu or Asp but may be other amino acids, including Leu, Met, His, Cys and Gln.. Functionally, probably plays an important role in intracellular peptide degradation. The sequence is that of Peptidase B from Vibrio atlanticus (strain LGP32) (Vibrio splendidus (strain Mel32)).